The sequence spans 1203 residues: ATP-dependent helicase/nuclease subunit A (1203 aa).

The UvrD-like helicase ATP-binding domain maps to 4–472 (VKLTPEQNEA…IRLKENFRSR (469 aa)). 25 to 32 (ASAGSGKT) is a binding site for ATP. The UvrD-like helicase C-terminal domain occupies 503–785 (VQGNITDYPV…RVMTFHKSKG (283 aa)).

It belongs to the helicase family. AddA subfamily. Heterodimer of AddA and AddB/RexB. Mg(2+) is required as a cofactor.

The enzyme catalyses Couples ATP hydrolysis with the unwinding of duplex DNA by translocating in the 3'-5' direction.. The catalysed reaction is ATP + H2O = ADP + phosphate + H(+). The heterodimer acts as both an ATP-dependent DNA helicase and an ATP-dependent, dual-direction single-stranded exonuclease. Recognizes the chi site generating a DNA molecule suitable for the initiation of homologous recombination. The AddA nuclease domain is required for chi fragment generation; this subunit has the helicase and 3' -&gt; 5' nuclease activities. This Lactococcus lactis subsp. lactis (strain IL1403) (Streptococcus lactis) protein is ATP-dependent helicase/nuclease subunit A.